The chain runs to 358 residues: Biotin synthase (358 aa).

The region spanning 55–278 is the Radical SAM core domain; that stretch reads NKVRIHILDN…VNPDSEIRIA (224 aa). The [4Fe-4S] cluster site is built by Cys70, Cys74, and Cys77. [2Fe-2S] cluster-binding residues include Cys114, Cys146, Cys206, and Arg276.

This sequence belongs to the radical SAM superfamily. Biotin synthase family. As to quaternary structure, homodimer. [4Fe-4S] cluster serves as cofactor. The cofactor is [2Fe-2S] cluster.

It catalyses the reaction (4R,5S)-dethiobiotin + (sulfur carrier)-SH + 2 reduced [2Fe-2S]-[ferredoxin] + 2 S-adenosyl-L-methionine = (sulfur carrier)-H + biotin + 2 5'-deoxyadenosine + 2 L-methionine + 2 oxidized [2Fe-2S]-[ferredoxin]. It functions in the pathway cofactor biosynthesis; biotin biosynthesis; biotin from 7,8-diaminononanoate: step 2/2. Catalyzes the conversion of dethiobiotin (DTB) to biotin by the insertion of a sulfur atom into dethiobiotin via a radical-based mechanism. This chain is Biotin synthase, found in Leptospira borgpetersenii serovar Hardjo-bovis (strain JB197).